The following is a 166-amino-acid chain: MSTKPLILLLANSKNSINRKFAKALEQQLNAELIELVDYQVDFYCEDLEKDHFPEKIKSLVRKLHDHKTLIFVTPEHNGFVPAFAKNTIDWMTRDTQYGKNQFLKELDGIICCVTPAAKSGGKTVLELLTKFFSFSGLNVKGAVLVNGYHDGFDFQPFITDVQKLI.

117–124 (AAKSGGKT) is a binding site for ATP.

This is an uncharacterized protein from Mycoplasma pneumoniae (strain ATCC 29342 / M129 / Subtype 1) (Mycoplasmoides pneumoniae).